A 220-amino-acid chain; its full sequence is Ribose-5-phosphate isomerase A (220 aa).

Substrate-binding positions include 25–28 (TGST), 80–83 (DGAD), and 93–96 (KGGG). The active-site Proton acceptor is the Glu-102. Lys-120 provides a ligand contact to substrate.

This sequence belongs to the ribose 5-phosphate isomerase family. As to quaternary structure, homodimer.

It catalyses the reaction aldehydo-D-ribose 5-phosphate = D-ribulose 5-phosphate. The protein operates within carbohydrate degradation; pentose phosphate pathway; D-ribose 5-phosphate from D-ribulose 5-phosphate (non-oxidative stage): step 1/1. Functionally, catalyzes the reversible conversion of ribose-5-phosphate to ribulose 5-phosphate. This is Ribose-5-phosphate isomerase A from Bacillus thuringiensis subsp. konkukian (strain 97-27).